The chain runs to 210 residues: Thymidylate kinase (210 aa).

Residue 10 to 17 participates in ATP binding; that stretch reads GLEGAGKT.

Belongs to the thymidylate kinase family.

It carries out the reaction dTMP + ATP = dTDP + ADP. Its function is as follows. Phosphorylation of dTMP to form dTDP in both de novo and salvage pathways of dTTP synthesis. This is Thymidylate kinase from Erwinia tasmaniensis (strain DSM 17950 / CFBP 7177 / CIP 109463 / NCPPB 4357 / Et1/99).